The sequence spans 198 residues: Small ribosomal subunit protein uS4 (198 aa).

The region spanning Leu-88–Val-153 is the S4 RNA-binding domain.

This sequence belongs to the universal ribosomal protein uS4 family. As to quaternary structure, part of the 30S ribosomal subunit. Contacts protein S5. The interaction surface between S4 and S5 is involved in control of translational fidelity.

Its function is as follows. One of the primary rRNA binding proteins, it binds directly to 16S rRNA where it nucleates assembly of the body of the 30S subunit. With S5 and S12 plays an important role in translational accuracy. This is Small ribosomal subunit protein uS4 from Lachnoclostridium phytofermentans (strain ATCC 700394 / DSM 18823 / ISDg) (Clostridium phytofermentans).